The chain runs to 114 residues: Fumarate reductase subunit D (114 aa).

Helical transmembrane passes span 25-45 (SGLA…FGII), 50-70 (IIAF…TIFP), and 94-114 (LIFY…VIAI).

It belongs to the FrdD family. Part of an enzyme complex containing four subunits: a flavoprotein (FrdA), an iron-sulfur protein (FrdB), and two hydrophobic anchor proteins (FrdC and FrdD).

The protein localises to the cell inner membrane. In terms of biological role, anchors the catalytic components of the fumarate reductase complex to the cell membrane, binds quinones. The polypeptide is Fumarate reductase subunit D (Mannheimia succiniciproducens (strain KCTC 0769BP / MBEL55E)).